The sequence spans 369 residues: Uroporphyrinogen decarboxylase (369 aa).

Substrate contacts are provided by residues 28 to 32, aspartate 78, tyrosine 154, serine 209, and histidine 339; that span reads RQAGR.

Belongs to the uroporphyrinogen decarboxylase family. As to quaternary structure, homodimer.

It localises to the cytoplasm. The enzyme catalyses uroporphyrinogen III + 4 H(+) = coproporphyrinogen III + 4 CO2. It functions in the pathway porphyrin-containing compound metabolism; protoporphyrin-IX biosynthesis; coproporphyrinogen-III from 5-aminolevulinate: step 4/4. Functionally, catalyzes the decarboxylation of four acetate groups of uroporphyrinogen-III to yield coproporphyrinogen-III. The protein is Uroporphyrinogen decarboxylase of Polaromonas sp. (strain JS666 / ATCC BAA-500).